Consider the following 411-residue polypeptide: Putative ion-transport protein YfeO (411 aa).

11 helical membrane-spanning segments follow: residues 9–29 (MLLL…VLIA), 54–74 (DSPF…GLII), 99–119 (ALPG…SLGP), 149–169 (ILAS…AALI), 186–206 (LFAP…FFHP), 223–243 (IASG…AVWC), 258–278 (VLIL…GGPL), 296–316 (LGAG…VIAA), 322–342 (GGRI…LHAH), 343–363 (VEAV…VLVV), and 386–406 (LLCI…LLAA).

Belongs to the chloride channel (TC 2.A.49) family.

The protein resides in the cell membrane. The sequence is that of Putative ion-transport protein YfeO from Salmonella choleraesuis (strain SC-B67).